Reading from the N-terminus, the 203-residue chain is Large ribosomal subunit protein bL25 (203 aa).

It belongs to the bacterial ribosomal protein bL25 family. CTC subfamily. In terms of assembly, part of the 50S ribosomal subunit; part of the 5S rRNA/L5/L18/L25 subcomplex. Contacts the 5S rRNA. Binds to the 5S rRNA independently of L5 and L18.

This is one of the proteins that binds to the 5S RNA in the ribosome where it forms part of the central protuberance. The protein is Large ribosomal subunit protein bL25 of Rickettsia africae (strain ESF-5).